The primary structure comprises 77 residues: Translational regulator CsrA (77 aa).

It belongs to the CsrA/RsmA family. As to quaternary structure, homodimer; the beta-strands of each monomer intercalate to form a hydrophobic core, while the alpha-helices form wings that extend away from the core.

The protein localises to the cytoplasm. A translational regulator that binds mRNA to regulate translation initiation and/or mRNA stability. Usually binds in the 5'-UTR at or near the Shine-Dalgarno sequence preventing ribosome-binding, thus repressing translation. Its main target seems to be the major flagellin gene, while its function is anatagonized by FliW. The polypeptide is Translational regulator CsrA (Pseudarthrobacter chlorophenolicus (strain ATCC 700700 / DSM 12829 / CIP 107037 / JCM 12360 / KCTC 9906 / NCIMB 13794 / A6) (Arthrobacter chlorophenolicus)).